A 438-amino-acid polypeptide reads, in one-letter code: GRAS family protein TF80 (438 aa).

One can recognise a GRAS domain in the interval 13–436 (LRYDSHGSNP…RPLFSVSAWK (424 aa)). Positions 20–81 (SNPMIPLIEC…YKIVKHLPGV (62 aa)) are leucine repeat I (LRI). The tract at residues 100–165 (QKYFYDLCPF…GGPPFLKITG (66 aa)) is VHIID. Residues 131–135 (VHIID) carry the VHIID motif. Residues 175 to 207 (QMSFHLTTEAGILDFPLQFNPIISKLEDVDFEN) form a leucine repeat II (LRII) region. The tract at residues 216 to 359 (VAISSVLQLH…SMLLGEQIKN (144 aa)) is PFYRE. The LXXLL motif signature appears at 224–228 (LHSLL). Residues 362–436 (TCEGVDRKER…RPLFSVSAWK (75 aa)) are SAW.

The protein belongs to the GRAS family. In terms of assembly, interacts with RAM1.

It localises to the nucleus. The polypeptide is GRAS family protein TF80 (TF80) (Medicago truncatula (Barrel medic)).